We begin with the raw amino-acid sequence, 329 residues long: Peroxidase 50 (329 aa).

Positions 1–25 (MVVVNKTNLLLLLLSLCLTLDLSSA) are cleaved as a signal peptide. 4 disulfide bridges follow: cysteine 36–cysteine 119, cysteine 69–cysteine 74, cysteine 125–cysteine 325, and cysteine 204–cysteine 236. Residue histidine 67 is the Proton acceptor of the active site. Aspartate 68, valine 71, glycine 73, aspartate 75, and serine 77 together coordinate Ca(2+). Proline 167 contacts substrate. Position 197 (histidine 197) interacts with heme b. Position 198 (threonine 198) interacts with Ca(2+). Asparagine 215 carries N-linked (GlcNAc...) asparagine glycosylation. Aspartate 249, threonine 252, and aspartate 257 together coordinate Ca(2+).

The protein belongs to the peroxidase family. Classical plant (class III) peroxidase subfamily. Heme b is required as a cofactor. It depends on Ca(2+) as a cofactor. As to expression, expressed in roots and leaves.

The protein localises to the secreted. It catalyses the reaction 2 a phenolic donor + H2O2 = 2 a phenolic radical donor + 2 H2O. Removal of H(2)O(2), oxidation of toxic reductants, biosynthesis and degradation of lignin, suberization, auxin catabolism, response to environmental stresses such as wounding, pathogen attack and oxidative stress. These functions might be dependent on each isozyme/isoform in each plant tissue. Functionally, exhibits a Ca(2+)-pectate binding affinity which could be interpreted in vivo as a specificity to interact with the pectic structure of the cell wall. This Arabidopsis thaliana (Mouse-ear cress) protein is Peroxidase 50 (PER50).